A 471-amino-acid chain; its full sequence is 6-phosphofructo-2-kinase/fructose-2,6-bisphosphatase 1 (471 aa).

An N-acetylserine modification is found at Ser-2. Residues 2-250 (SREMGELTQT…AYYLMNIHVT (249 aa)) form a 6-phosphofructo-2-kinase region. Ser-33 carries the post-translational modification Phosphoserine; by PKA. Residue 49–57 (GLPARGKTY) coordinates ATP. Arg-82 and Arg-105 together coordinate beta-D-fructose 6-phosphate. Residue Asp-131 is part of the active site. Positions 133 and 139 each coordinate beta-D-fructose 6-phosphate. The residue at position 141 (Ser-141) is a Phosphoserine. Residue Cys-161 is part of the active site. ATP is bound at residue 170–175 (NIKQVK). Beta-D-fructose 6-phosphate-binding residues include Lys-175, Arg-196, and Tyr-200. The interval 251 to 471 (PRSIYLCRHG…EALDTVPAHY (221 aa)) is fructose-2,6-bisphosphatase. Arg-258 provides a ligand contact to beta-D-fructose 2,6-bisphosphate. Residue His-259 is the Tele-phosphohistidine intermediate of the active site. The beta-D-fructose 2,6-bisphosphate site is built by Asn-265, Gly-271, and Arg-308. The active-site Proton donor/acceptor is the Glu-328. Beta-D-fructose 2,6-bisphosphate-binding residues include Tyr-339, Arg-353, Lys-357, Tyr-368, Gln-394, and Arg-398. 350–353 (FALR) serves as a coordination point for ATP. Residues 394–398 (QAVMR) and Tyr-430 each bind ATP.

This sequence in the C-terminal section; belongs to the phosphoglycerate mutase family. Homodimer. In terms of tissue distribution, liver.

It carries out the reaction beta-D-fructose 2,6-bisphosphate + H2O = beta-D-fructose 6-phosphate + phosphate. It catalyses the reaction beta-D-fructose 6-phosphate + ATP = beta-D-fructose 2,6-bisphosphate + ADP + H(+). With respect to regulation, phosphorylation at Ser-33 inhibits the kinase and activates the bisphosphatase. Functionally, synthesis and degradation of fructose 2,6-bisphosphate. The chain is 6-phosphofructo-2-kinase/fructose-2,6-bisphosphatase 1 from Mus musculus (Mouse).